Consider the following 886-residue polypeptide: Pyruvate dehydrogenase E1 component (886 aa).

Homodimer. Part of the PDH complex, consisting of multiple copies of pyruvate dehydrogenase (E1), dihydrolipoamide acetyltransferase (E2) and lipoamide dehydrogenase (E3). Requires thiamine diphosphate as cofactor.

The enzyme catalyses N(6)-[(R)-lipoyl]-L-lysyl-[protein] + pyruvate + H(+) = N(6)-[(R)-S(8)-acetyldihydrolipoyl]-L-lysyl-[protein] + CO2. In terms of biological role, component of the pyruvate dehydrogenase (PDH) complex, that catalyzes the overall conversion of pyruvate to acetyl-CoA and CO(2). This is Pyruvate dehydrogenase E1 component (aceE) from Haemophilus influenzae (strain ATCC 51907 / DSM 11121 / KW20 / Rd).